The primary structure comprises 226 residues: Isoprenyl transferase (226 aa).

Aspartate 12 is a catalytic residue. Aspartate 12 contacts Mg(2+). Substrate-binding positions include glycine 13–arginine 16, tryptophan 17, lysine 25, histidine 29, and serine 57–glutamate 59. Residue asparagine 60 is the Proton acceptor of the active site. Substrate is bound by residues tryptophan 61, arginine 63, arginine 174, and arginine 180–serine 182. Glutamate 193 is a binding site for Mg(2+).

Belongs to the UPP synthase family. In terms of assembly, homodimer. Requires Mg(2+) as cofactor.

Catalyzes the condensation of isopentenyl diphosphate (IPP) with allylic pyrophosphates generating different type of terpenoids. The protein is Isoprenyl transferase of Rickettsia sibirica (strain ATCC VR-151 / 246).